Reading from the N-terminus, the 230-residue chain is Cytidylate kinase (230 aa).

12 to 20 (GPSGAGKGT) is a binding site for ATP.

The protein belongs to the cytidylate kinase family. Type 1 subfamily.

It is found in the cytoplasm. It catalyses the reaction CMP + ATP = CDP + ADP. It carries out the reaction dCMP + ATP = dCDP + ADP. The sequence is that of Cytidylate kinase from Shewanella sp. (strain MR-7).